Reading from the N-terminus, the 1145-residue chain is Cation channel sperm-associated auxiliary subunit gamma 2 (1145 aa).

The N-terminal stretch at 1 to 38 is a signal peptide; that stretch reads MVSRPAMSPVSPVWPRKPNLWAFWVLRLVLLLSLKSWA. The Extracellular segment spans residues 39-1061; it reads EDALQHCTWL…IHGLPLSSKR (1023 aa). 2 disulfide bridges follow: Cys-45–Cys-106 and Cys-160–Cys-166. Residue Asn-103 is glycosylated (N-linked (GlcNAc...) asparagine). An N-linked (GlcNAc...) asparagine glycan is attached at Asn-178. An intrachain disulfide couples Cys-289 to Cys-344. 4 N-linked (GlcNAc...) asparagine glycosylation sites follow: Asn-356, Asn-402, Asn-672, and Asn-743. 6 cysteine pairs are disulfide-bonded: Cys-395–Cys-403, Cys-634–Cys-856, Cys-802–Cys-830, Cys-878–Cys-1042, Cys-905–Cys-914, and Cys-1006–Cys-1012. Asn-1038 carries N-linked (GlcNAc...) asparagine glycosylation. Residues 1062–1083 traverse the membrane as a helical segment; it reads TSFIVMVSTSFFIALVVFYILF. The Cytoplasmic segment spans residues 1084–1145; it reads CLVWPHIVKA…KEDNVQAKTA (62 aa).

This sequence belongs to the CATSPERG family. In terms of assembly, component of the CatSper complex or CatSpermasome composed of the core pore-forming members CATSPER1, CATSPER2, CATSPER3 and CATSPER4 as well as auxiliary members CATSPERB, CATSPERG2, CATSPERD, CATSPERE, CATSPERZ, C2CD6/CATSPERT, SLCO6C1, TMEM249, TMEM262 and EFCAB9. HSPA1 may be an additional auxiliary complex member. The core complex members CATSPER1, CATSPER2, CATSPER3 and CATSPER4 form a heterotetrameric channel. The auxiliary CATSPERB, CATSPERG2, CATSPERD and CATSPERE subunits form a pavilion-like structure over the pore which stabilizes the complex through interactions with CATSPER4, CATSPER3, CATSPER1 and CATSPER2 respectively. SLCO6C1 interacts with CATSPERE and TMEM262/CATSPERH interacts with CATSPERB, further stabilizing the complex. C2CD6/CATSPERT interacts at least with CATSPERD and is required for targeting the CatSper complex in the flagellar membrane. In terms of tissue distribution, testis-specific. Specifically expressed in the principal piece of the sperm tail (at protein level). Expressed in spermatocytes and spermatids within the seminiferous tubule but not in interstitial cells.

The protein resides in the cell projection. It is found in the cilium. Its subcellular location is the flagellum membrane. In terms of biological role, auxiliary component of the CatSper complex, a complex involved in sperm cell hyperactivation. Sperm cell hyperactivation is needed for sperm motility which is essential late in the preparation of sperm for fertilization. The polypeptide is Cation channel sperm-associated auxiliary subunit gamma 2 (Mus musculus (Mouse)).